The following is a 401-amino-acid chain: Acetylornithine aminotransferase (401 aa).

Pyridoxal 5'-phosphate-binding positions include 121-122 (GA) and phenylalanine 154. N(2)-acetyl-L-ornithine is bound at residue arginine 157. Pyridoxal 5'-phosphate is bound at residue 239–242 (DEVQ). Lysine 268 bears the N6-(pyridoxal phosphate)lysine mark. Residue serine 296 coordinates N(2)-acetyl-L-ornithine. Threonine 297 contacts pyridoxal 5'-phosphate.

Belongs to the class-III pyridoxal-phosphate-dependent aminotransferase family. ArgD subfamily. As to quaternary structure, homodimer. It depends on pyridoxal 5'-phosphate as a cofactor.

It localises to the cytoplasm. It catalyses the reaction N(2)-acetyl-L-ornithine + 2-oxoglutarate = N-acetyl-L-glutamate 5-semialdehyde + L-glutamate. It participates in amino-acid biosynthesis; L-arginine biosynthesis; N(2)-acetyl-L-ornithine from L-glutamate: step 4/4. In Myxococcus xanthus, this protein is Acetylornithine aminotransferase.